Reading from the N-terminus, the 402-residue chain is MMGSWKHCLFSASLISALIFVFVYNTELWENKRFLRAALSNASLLAEACHQIFEGKVFYPTENALKTTLDEATCYEYMVRSHYVTETLSEEEAGFPLAYTVTIHKDFGTFERLFRAIYMPQNVYCVHLDQKATDAFKGAVKQLLSCFPNAFLASKKESVVYGGISRLQADLNCLEDLVASEVPWKYVINTCGQDFPLKTNREIVQYLKGFKGKNITPGVLPPDHAVGRTKYVHQELLNHKNSYVIKTTKLKTPPPHDMVIYFGTAYVALTRDFANFVLQDQLALDLLSWSKDTYSPDEHFWVTLNRIPGVPGSMPNASWTGNLRAIKWSDMEDRHGGCHGHYVHGICIYGNGDLKWLVNSPSLFANKFELNTYPLTVECLELRHRERTLNQSETAIQPSWYF.

The Cytoplasmic segment spans residues 1–7; that stretch reads MMGSWKH. A helical; Signal-anchor for type II membrane protein transmembrane segment spans residues 8–23; that stretch reads CLFSASLISALIFVFV. The Lumenal portion of the chain corresponds to 24–400; the sequence is YNTELWENKR…QSETAIQPSW (377 aa). Asn-41 carries an N-linked (GlcNAc...) asparagine glycan.

Belongs to the glycosyltransferase 14 family. Expressed in lens epithelium cells. In terms of tissue distribution, expressed in reticulocytes.

Its subcellular location is the golgi apparatus membrane. It carries out the reaction a beta-D-Gal-(1-&gt;4)-beta-D-GlcNAc-(1-&gt;3)-beta-D-Gal-(1-&gt;4)-beta-D-GlcNAc derivative + UDP-N-acetyl-alpha-D-glucosamine = a beta-D-Gal-(1-&gt;4)-beta-D-GlcNAc-(1-&gt;3)-[beta-D-GlcNAc-(1-&gt;6)]-beta-D-Gal-(1-&gt;4)-N-acetyl-beta-D-glucosaminyl derivative + UDP + H(+). It participates in protein modification; protein glycosylation. Branching enzyme that converts linear into branched poly-N-acetyllactosaminoglycans. Introduces the blood group I antigen during embryonic development. It is closely associated with the development and maturation of erythroid cells. In terms of biological role, determines the expression of the blood group I antigen in erythrocytes. This Homo sapiens (Human) protein is N-acetyllactosaminide beta-1,6-N-acetylglucosaminyl-transferase (GCNT2).